We begin with the raw amino-acid sequence, 302 residues long: 4-hydroxy-tetrahydrodipicolinate synthase (302 aa).

Pyruvate is bound at residue Thr55. The active-site Proton donor/acceptor is Tyr144. The active-site Schiff-base intermediate with substrate is the Lys172. Val214 is a binding site for pyruvate.

Belongs to the DapA family. As to quaternary structure, homotetramer; dimer of dimers.

It is found in the cytoplasm. The catalysed reaction is L-aspartate 4-semialdehyde + pyruvate = (2S,4S)-4-hydroxy-2,3,4,5-tetrahydrodipicolinate + H2O + H(+). Its pathway is amino-acid biosynthesis; L-lysine biosynthesis via DAP pathway; (S)-tetrahydrodipicolinate from L-aspartate: step 3/4. Its function is as follows. Catalyzes the condensation of (S)-aspartate-beta-semialdehyde [(S)-ASA] and pyruvate to 4-hydroxy-tetrahydrodipicolinate (HTPA). In Synechococcus sp. (strain WH7803), this protein is 4-hydroxy-tetrahydrodipicolinate synthase.